We begin with the raw amino-acid sequence, 443 residues long: Monooxygenase asqM (443 aa).

It belongs to the aromatic-ring hydroxylase family. The cofactor is FAD.

It functions in the pathway secondary metabolite biosynthesis. Its pathway is alkaloid biosynthesis. The protein operates within mycotoxin biosynthesis. Monooxygenase; part of the gene cluster that mediates the biosynthesis of the aspoquinolone mycotoxins. The role of asqM within the aspoquinolone pathway has still to be determined. The first step of the pathway is catalyzed by the nonribosomal peptide synthetase asqK that condenses anthranilic acid and O-methyl-L-tyrosine to produce 4'-methoxycyclopeptin. 4'-methoxycyclopeptin is then converted to 4'-methoxydehydrocyclopeptin by the ketoglutarate-dependent dioxygenase asqJ. AsqJ also converts its first product 4'-methoxydehydrocyclopeptin to 4'-methoxycyclopenin. The following conversion of 4'-methoxycyclopenin into 4'-methoxyviridicatin is catalyzed by the cyclopenase asqI. 4'-methoxyviridicatin is the precursor of quinolone natural products, and is further converted to quinolinone B. The prenyltransferase asqH1 then catalyzes the canonical Friedel-Crafts alkylation of quinolinone B with dimethylallyl cation to yield dimethylallyl quinolone, which is subjected to FAD-dependent dehydrogenation by the FAD-linked oxidoreductase asqF to yield conjugated aryl diene. The delta(3') double bond then serves as the site of the second alkylation with DMAPP catalyzed by the prenyltransferase asqH2 to yield a carbenium ion intermediate, which can be attacked by H(2)O to yield a styrenyl quinolone containing a C3'-hydroxyprenyl chain. The FAD-dependent monooxygenase asqG performs epoxidation of the terminal C7'-C8' olefin. Finally, after dehydratation of the epoxide at C3 by asqC, the quinolone epoxide rearrangement protein asqO catalyzes an enzymatic 3-exo-tet cyclization to yield the cyclopropyl-THF ring system in aspoquinolone. In Emericella nidulans (strain FGSC A4 / ATCC 38163 / CBS 112.46 / NRRL 194 / M139) (Aspergillus nidulans), this protein is Monooxygenase asqM.